We begin with the raw amino-acid sequence, 290 residues long: Nitrogenase iron protein 2 (290 aa).

Residue 10-17 participates in ATP binding; that stretch reads GKGGIGKS. A [4Fe-4S] cluster-binding site is contributed by Cys-98. Arg-101 carries the ADP-ribosylarginine; by dinitrogenase reductase ADP-ribosyltransferase modification. Cys-133 contributes to the [4Fe-4S] cluster binding site.

This sequence belongs to the NifH/BchL/ChlL family. Homodimer. [4Fe-4S] cluster serves as cofactor. Post-translationally, the reversible ADP-ribosylation of Arg-101 inactivates the nitrogenase reductase and regulates nitrogenase activity.

It carries out the reaction N2 + 8 reduced [2Fe-2S]-[ferredoxin] + 16 ATP + 16 H2O = H2 + 8 oxidized [2Fe-2S]-[ferredoxin] + 2 NH4(+) + 16 ADP + 16 phosphate + 6 H(+). In terms of biological role, the key enzymatic reactions in nitrogen fixation are catalyzed by the nitrogenase complex, which has 2 components: the iron protein (component 2) and a component 1 which is either a molybdenum-iron protein, a vanadium-iron, or an iron-iron protein. The sequence is that of Nitrogenase iron protein 2 (vnfH) from Azotobacter vinelandii.